Consider the following 469-residue polypeptide: Ribosomal protein uS12 methylthiotransferase RimO (469 aa).

An MTTase N-terminal domain is found at N34–P144. Residues C43, C79, C108, C176, C180, and C183 each contribute to the [4Fe-4S] cluster site. One can recognise a Radical SAM core domain in the interval L162–A399. The TRAM domain maps to Q402–R468.

It belongs to the methylthiotransferase family. RimO subfamily. The cofactor is [4Fe-4S] cluster.

It localises to the cytoplasm. It carries out the reaction L-aspartate(89)-[ribosomal protein uS12]-hydrogen + (sulfur carrier)-SH + AH2 + 2 S-adenosyl-L-methionine = 3-methylsulfanyl-L-aspartate(89)-[ribosomal protein uS12]-hydrogen + (sulfur carrier)-H + 5'-deoxyadenosine + L-methionine + A + S-adenosyl-L-homocysteine + 2 H(+). Functionally, catalyzes the methylthiolation of an aspartic acid residue of ribosomal protein uS12. The chain is Ribosomal protein uS12 methylthiotransferase RimO from Vibrio vulnificus (strain CMCP6).